The primary structure comprises 309 residues: UDP-N-acetylenolpyruvoylglucosamine reductase (309 aa).

Residues 34-199 (RVGGPAQVLF…TSARLRGTPA (166 aa)) enclose the FAD-binding PCMH-type domain. Arg-179 is an active-site residue. Residue Ser-228 is the Proton donor of the active site. The active site involves Glu-298.

This sequence belongs to the MurB family. FAD is required as a cofactor.

Its subcellular location is the cytoplasm. The enzyme catalyses UDP-N-acetyl-alpha-D-muramate + NADP(+) = UDP-N-acetyl-3-O-(1-carboxyvinyl)-alpha-D-glucosamine + NADPH + H(+). Its pathway is cell wall biogenesis; peptidoglycan biosynthesis. Functionally, cell wall formation. The chain is UDP-N-acetylenolpyruvoylglucosamine reductase from Rhodopseudomonas palustris (strain ATCC BAA-98 / CGA009).